We begin with the raw amino-acid sequence, 233 residues long: Orotidine 5'-phosphate decarboxylase (233 aa).

Substrate contacts are provided by residues aspartate 11, lysine 34, 61–70 (DLKLHDIPNT), threonine 117, arginine 179, glutamine 189, glycine 209, and arginine 210. The Proton donor role is filled by lysine 63.

It belongs to the OMP decarboxylase family. Type 1 subfamily. In terms of assembly, homodimer.

The catalysed reaction is orotidine 5'-phosphate + H(+) = UMP + CO2. The protein operates within pyrimidine metabolism; UMP biosynthesis via de novo pathway; UMP from orotate: step 2/2. Catalyzes the decarboxylation of orotidine 5'-monophosphate (OMP) to uridine 5'-monophosphate (UMP). This chain is Orotidine 5'-phosphate decarboxylase, found in Streptococcus agalactiae serotype III (strain NEM316).